A 224-amino-acid polypeptide reads, in one-letter code: A-type ATP synthase subunit D (224 aa).

Over residues 200 to 209 (KKVKDKKEAQ) the composition is skewed to basic and acidic residues. The segment at 200–224 (KKVKDKKEAQEEAADEAAAAESTGA) is disordered. Low complexity predominate over residues 215–224 (EAAAAESTGA).

Belongs to the V-ATPase D subunit family. Has multiple subunits with at least A(3), B(3), C, D, E, F, H, I and proteolipid K(x).

The protein resides in the cell membrane. In terms of biological role, component of the A-type ATP synthase that produces ATP from ADP in the presence of a proton gradient across the membrane. The protein is A-type ATP synthase subunit D of Halobacterium salinarum (strain ATCC 29341 / DSM 671 / R1).